A 345-amino-acid polypeptide reads, in one-letter code: Protein Tob1 (345 aa).

A Bipartite nuclear localization signal motif is present at residues arginine 22 to lysine 39. Residues valine 82–valine 92 form an important for nuclear localization region. Over residues aspartate 144–serine 160 the composition is skewed to low complexity. A disordered region spans residues aspartate 144 to serine 171. The tract at residues alanine 161–lysine 218 is required for interaction with CPEB3. Position 204 is a phosphothreonine (threonine 204). Residues methionine 226–leucine 234 carry the Nuclear export signal motif. The disordered stretch occupies residues glycine 231 to leucine 267. The span at glutamine 237–proline 246 shows a compositional bias: low complexity. The span at alanine 247–glutamine 257 shows a compositional bias: pro residues.

Belongs to the BTG family. In terms of assembly, interacts with ERBB2. Interacts with CNOT7. Interacts with CPEB3 (via C-terminal RNA-binding region); recruits CNOT7 to CPEB3 to form a ternary complex required for mRNA deadenylation and decay. Interacts with CNOT8. Interacts with CPEB4. Phosphorylated on Ser and Thr residues. As to expression, ubiquitous.

The protein resides in the cytoplasm. Its subcellular location is the nucleus. Functionally, anti-proliferative protein; the function is mediated by association with deadenylase subunits of the CCR4-NOT complex. Mediates CPEB3-accelerated mRNA deadenylation by binding to CPEB3 and recruiting CNOT7 which leads to target mRNA deadenylation and decay. The chain is Protein Tob1 (TOB1) from Homo sapiens (Human).